Consider the following 609-residue polypeptide: Cell division protein DipM (609 aa).

Residues 1-24 form the signal peptide; that stretch reads MRQLWTQAAVIALTAGTLGAPAHA. The disordered stretch occupies residues 21 to 103; that stretch reads PAHASGQSGQ…PVLRATPPRT (83 aa). Positions 25 to 38 are enriched in polar residues; the sequence is SGQSGQRFTPNFPI. Positions 79–93 are enriched in pro residues; sequence LPPPAPVSTPAPAPQ. 2 LysM domains span residues 121 to 165 and 171 to 215; these read QVRV…KIKG and KAYV…KLLL. 2 stretches are compositionally biased toward low complexity: residues 242–258 and 265–280; these read AEPA…AATP and PVSE…STTT. The interval 242-280 is disordered; sequence AEPAPATTRPATPAATPSRPVRQPVSEETSEPATTSTTT. 2 LysM domains span residues 295–339 and 345–389; these read QVHT…KIKG and KAYS…KIAL. The interval 389-457 is disordered; it reads LPDGFRDKGP…AAQPITPPPS (69 aa). Over residues 400 to 429 the composition is skewed to low complexity; that stretch reads RTTTTTRPATPPANTYARVDSSAAAASTPS. A lytM region spans residues 503–603; it reads NDGLNIRAPQ…VKDKAKPVDP (101 aa).

It localises to the periplasm. Required for efficient cell division, cell polarity and normal cell morphology. Facilitates remodeling of the peptidoglycan layer and, thus, coordinated constriction of the cell envelope during the division process. Plays a critical role in maintaining proper cell envelope architecture during growth and division. Required for normal envelope invagination during cell division and to establish or maintain outer membrane connections throughout the cell envelope. May serve as a regulatory hub coordinating the activities of multiple peptidoglycan-degrading enzymes during cell constriction. Required to position SdpA and SdpB at midcell. The protein is Cell division protein DipM of Caulobacter vibrioides (strain NA1000 / CB15N) (Caulobacter crescentus).